A 1341-amino-acid chain; its full sequence is MAYSYSEKKRIRKDFGKRPQVLDIPFLLSTQLKSFKKFLVPDADGDHGLEAAFRSVFPIKSYSGNSELQYVSYRIGEPVFDVKECQIRGVTYSAPLRVKLRLVVMDKEAPGTVKDIKEQEVYMGEIPLMTDTGTFVINGTERVIVSQLHRSPGVFFDNDRGKTHSSGKVLYNARVIPYRGSWLDFEFDAKDNLYVRIDRRRKLPASIILRALEYSSEDILGIFFDNTTFEVTDGKVLMELVPSRLRGETAAFDIKSEDGEVFVESGRRVTARHIKNIEKKGIKQLEVPHEYIIGRVLAKNYVDESTGEVVANANDELTLELMAELVKAGHTKIDTLYINEVDSGAYMSNTLNIDSSSSRLEALVEIYRMMRPGEPPTKDAAEALFQNLFFSEERYDLSTVGRMKFNSRVGYDTDTGPGTLSKEDIVSVMKVLIAIRNGVGDVDDIDHLGNRRIRSVGEMAENQFRVGLVRVERAVRERLSLGDLDAIMPQDLINAKPISAAVKEFFGSSQLSQFMDQNNPLSEVTHKRRISALGPGGLTRERAGFEVRDVHVTHYGRVCPIETPEGPNIGLINSLSTYARTNDYGFLETPYRKVVDGVVTDEVDYLSAIEEGQFVIAQANSNLTETNEFVDELIPCRHKGESTFMGRMDQQYMDVSPQQVISVAAALIPFLEHDDANRALMGSNMQRQAVPTLKADKPLVGTGIELTLAKDSGVTIVAKRGGEVMYCDASRIVVNVHEEERVPGEAGIDIYNLTKYTRSNQNTCINQKPTCMVGEPVTRGDVLADGPSTDLGDLALGQNLRVAFMPWNGYNFEDSILLSERVVEEDRLTTIHIQELQCIARDTKLGSEEITADIPNVGESALGKLDESGVVYIGAEVKSGDILVGKVTPKGETQLTPEEKLLRAIFGEKASDVKDSSLRVPNSVTGTVIDVQVFTRDGVEKDKRALEVEEMQLRDAKKDFNEEFRILEAGVLDRARKLLIAAGFDEDKLALLNAEKLLTQSLAEEDKQAELEQLAAQYDELKAEYDKKFENKRRKITQGDDLAPGVLKIVKVYLAVKRCIQPGDKMAGRHGNKGVISTIVPVEDMPYDDKGRTVDIVLNPLGVPSRMNIGQILETHMGLAARGIGERIEEMMKEQRELHELRAFIKQAYEIGESRQVVDIDSFTDDEIRRLAENLKGGLPIATPAFDGAKENEIKDMLELAGYPRSGQVTLYDGRTGDQFERQVTVGYMYMLKLNHLVDDKMHARSTGSYSLVTQQPLGGKAQFGGQRFGEMEVWALEAYGAAYTLQEMLTVKSDDVNGRTKMYKNIVDGNHKMEPGMPESFNVLLKEIRSLGINIELEEN.

It belongs to the RNA polymerase beta chain family. As to quaternary structure, the RNAP catalytic core consists of 2 alpha, 1 beta, 1 beta' and 1 omega subunit. When a sigma factor is associated with the core the holoenzyme is formed, which can initiate transcription.

It catalyses the reaction RNA(n) + a ribonucleoside 5'-triphosphate = RNA(n+1) + diphosphate. In terms of biological role, DNA-dependent RNA polymerase catalyzes the transcription of DNA into RNA using the four ribonucleoside triphosphates as substrates. The chain is DNA-directed RNA polymerase subunit beta from Pseudoalteromonas translucida (strain TAC 125).